A 288-amino-acid polypeptide reads, in one-letter code: Fibroblast growth factor 2 (288 aa).

The interval 1-133 (MVGVGGGDVE…RGSRPGPAGT (133 aa)) is disordered. A propeptide spans 1-142 (MVGVGGGDVE…TMAAGSITTL (142 aa)) (or 93, or 124, or 125, or 131, or 161). Low complexity predominate over residues 52-64 (SVNPRSRAAGSPR). A compositionally biased stretch (basic and acidic residues) spans 68-84 (RRTEERPSGSRLGDRGR). Omega-N-methylarginine; alternate is present on residues arginine 108, arginine 110, and arginine 112. A symmetric dimethylarginine; alternate mark is found at arginine 108, arginine 110, and arginine 112. Positions 113–132 (GTAAPRAAPAARGSRPGPAG) are enriched in low complexity. Asparagine 169 lines the heparin pocket. A Cell attachment site; atypical motif is present at residues 179–181 (DGR). Tyrosine 215 is subject to Phosphotyrosine; by TEC. The Cell attachment site; atypical signature appears at 221 to 223 (DGR). A Glycyl lysine isopeptide (Lys-Gly) (interchain with G-Cter in SUMO1) cross-link involves residue lysine 228. Positions 261-277 (KRTGQYKLGSKTGPGQK) are heparin-binding.

It belongs to the heparin-binding growth factors family. Monomer. Homodimer. Interacts with FGFR1, FGFR2, FGFR3 and FGFR4. Affinity between fibroblast growth factors (FGFs) and their receptors is increased by heparan sulfate glycosaminoglycans that function as coreceptors. Interacts with CSPG4, FGFBP1 and TEC. Found in a complex with FGFBP1, FGF1 and FGF2. Interacts with FGFBP3. Interacts with integrin ITGAV:ITGB3; the interaction is required for FGF2 signaling. Interacts with SNORC (via the extracellular domain). Interacts with glypican GPC3. Post-translationally, phosphorylation at Tyr-215 regulates FGF2 unconventional secretion. Several N-termini starting at positions 94, 125, 126, 132, 143 and 162 have been identified by direct sequencing. In terms of tissue distribution, expressed in granulosa and cumulus cells. Expressed in hepatocellular carcinoma cells, but not in non-cancerous liver tissue.

Its subcellular location is the secreted. It is found in the nucleus. In terms of biological role, acts as a ligand for FGFR1, FGFR2, FGFR3 and FGFR4. Also acts as an integrin ligand which is required for FGF2 signaling. Binds to integrin ITGAV:ITGB3. Plays an important role in the regulation of cell survival, cell division, cell differentiation and cell migration. Functions as a potent mitogen in vitro. Can induce angiogenesis. Mediates phosphorylation of ERK1/2 and thereby promotes retinal lens fiber differentiation. In Homo sapiens (Human), this protein is Fibroblast growth factor 2 (FGF2).